A 110-amino-acid chain; its full sequence is NADH-quinone oxidoreductase subunit K (110 aa).

Transmembrane regions (helical) follow at residues 7–27 (LGSYLLVGAMLFCLGLYGVFV), 31–51 (IIAILMSIELMLNAVNINFIA), and 73–93 (IFVIVVAAAEIAVGLALVIAI).

Belongs to the complex I subunit 4L family. NDH-1 is composed of 14 different subunits. Subunits NuoA, H, J, K, L, M, N constitute the membrane sector of the complex.

It localises to the cell membrane. The enzyme catalyses a quinone + NADH + 5 H(+)(in) = a quinol + NAD(+) + 4 H(+)(out). In terms of biological role, NDH-1 shuttles electrons from NADH, via FMN and iron-sulfur (Fe-S) centers, to quinones in the respiratory chain. The immediate electron acceptor for the enzyme in this species is believed to be a menaquinone. Couples the redox reaction to proton translocation (for every two electrons transferred, four hydrogen ions are translocated across the cytoplasmic membrane), and thus conserves the redox energy in a proton gradient. In Desulfitobacterium hafniense (strain DSM 10664 / DCB-2), this protein is NADH-quinone oxidoreductase subunit K.